The primary structure comprises 929 residues: Probable LRR receptor-like serine/threonine-protein kinase At1g67720 (929 aa).

Positions 1–21 (MGLCLAQLAVTCLFLVPFVLS) are cleaved as a signal peptide. The Extracellular segment spans residues 22–531 (QVTEFVSIDC…NEAQRKHFWQ (510 aa)). 7 N-linked (GlcNAc...) asparagine glycosylation sites follow: Asn-36, Asn-173, Asn-236, Asn-293, Asn-320, Asn-332, and Asn-407. 4 LRR repeats span residues 413-437 (PPRVTKIALSRKNLRGEIPPGINYM), 438-460 (EALTELWLDDNELTGTLPDMSKL), 461-484 (VNLKIMHLENNQLSGSLPPYLAHL), and 485-508 (PNLQELSIENNSFKGKIPSALLKG). Residue Asn-494 is glycosylated (N-linked (GlcNAc...) asparagine). Residues 532–552 (ILGISIAAVAILLLLVGGSLV) form a helical membrane-spanning segment. Residues 553–929 (LLCALRKTKR…SRNSLAPAAR (377 aa)) lie on the Cytoplasmic side of the membrane. In terms of domain architecture, Protein kinase spans 606–880 (DNFSKKVGRG…EVIVAIQDAI (275 aa)). Residues 612–620 (VGRGSFGSV) and Lys-634 each bind ATP. A Phosphotyrosine modification is found at Tyr-679. Residue Asp-731 is the Proton acceptor of the active site. Phosphoserine occurs at positions 735 and 764. Position 770 is a phosphothreonine (Thr-770). Residue Tyr-778 is modified to Phosphotyrosine.

The protein belongs to the protein kinase superfamily. Ser/Thr protein kinase family.

Its subcellular location is the membrane. It catalyses the reaction L-seryl-[protein] + ATP = O-phospho-L-seryl-[protein] + ADP + H(+). The enzyme catalyses L-threonyl-[protein] + ATP = O-phospho-L-threonyl-[protein] + ADP + H(+). This chain is Probable LRR receptor-like serine/threonine-protein kinase At1g67720, found in Arabidopsis thaliana (Mouse-ear cress).